We begin with the raw amino-acid sequence, 110 residues long: MVMVTQKIYIELKAFDSYLLDRSARSIILTAKRSGARVNGPIFFPRRVAKFIVNRSTHVDKKSREQFEIRTHKRLISLPKANSTIIQALMSLQLPAGVDVKVKVIGGSNG.

This sequence belongs to the universal ribosomal protein uS10 family. In terms of assembly, part of the 30S ribosomal subunit.

In terms of biological role, involved in the binding of tRNA to the ribosomes. The sequence is that of Small ribosomal subunit protein uS10 from Ehrlichia ruminantium (strain Gardel).